We begin with the raw amino-acid sequence, 224 residues long: Phosphoribosylformylglycinamidine synthase subunit PurQ (224 aa).

Residues 2–224 enclose the Glutamine amidotransferase type-1 domain; the sequence is TVAVVRFGGS…DGQGILGAFA (223 aa). Cys85 serves as the catalytic Nucleophile. Catalysis depends on residues His202 and Glu204.

In terms of assembly, part of the FGAM synthase complex composed of 1 PurL, 1 PurQ and 2 PurS subunits.

It localises to the cytoplasm. The enzyme catalyses N(2)-formyl-N(1)-(5-phospho-beta-D-ribosyl)glycinamide + L-glutamine + ATP + H2O = 2-formamido-N(1)-(5-O-phospho-beta-D-ribosyl)acetamidine + L-glutamate + ADP + phosphate + H(+). It catalyses the reaction L-glutamine + H2O = L-glutamate + NH4(+). The protein operates within purine metabolism; IMP biosynthesis via de novo pathway; 5-amino-1-(5-phospho-D-ribosyl)imidazole from N(2)-formyl-N(1)-(5-phospho-D-ribosyl)glycinamide: step 1/2. Part of the phosphoribosylformylglycinamidine synthase complex involved in the purines biosynthetic pathway. Catalyzes the ATP-dependent conversion of formylglycinamide ribonucleotide (FGAR) and glutamine to yield formylglycinamidine ribonucleotide (FGAM) and glutamate. The FGAM synthase complex is composed of three subunits. PurQ produces an ammonia molecule by converting glutamine to glutamate. PurL transfers the ammonia molecule to FGAR to form FGAM in an ATP-dependent manner. PurS interacts with PurQ and PurL and is thought to assist in the transfer of the ammonia molecule from PurQ to PurL. This is Phosphoribosylformylglycinamidine synthase subunit PurQ from Halobacterium salinarum (strain ATCC 700922 / JCM 11081 / NRC-1) (Halobacterium halobium).